Consider the following 300-residue polypeptide: MRVIPLASESLGVRSLATFVEASGIKILIDPGVALGPKRYGLPPAKAEMEVLQKMRRKLQGYARRSEVVVISHYHYDHHTPFFEGLYESSSESYAREIYEGKPLFIKHPRENINFSQRKRAWAFLKNTEPIAGKIEFADGKSFDLGGVELEFSPAVPHGSEGSRLGFVVMTLIDDGSKRVIHASDIQMLNRKSVEWIIEKVPDLLITGGPPTYLGKRAEGSWQAGIKNLNEIIRETGAEIILDHHIIRDKNYPRFFDELEEIPKTFAGYLKVEDRPLEAYRRELHKIEKGGEAEIPFKLS.

It belongs to the UPF0282 family.

This Thermococcus onnurineus (strain NA1) protein is UPF0282 protein TON_1363.